A 503-amino-acid chain; its full sequence is ATP synthase subunit alpha (503 aa).

170–177 (GDRQTGKT) contacts ATP.

In terms of assembly, F-type ATPases have 2 components, CF(1) - the catalytic core - and CF(0) - the membrane proton channel. CF(1) has five subunits: alpha(3), beta(3), gamma(1), delta(1), epsilon(1). CF(0) has four main subunits: a(1), b(1), b'(1) and c(9-12).

The protein resides in the cellular thylakoid membrane. The catalysed reaction is ATP + H2O + 4 H(+)(in) = ADP + phosphate + 5 H(+)(out). With respect to regulation, inhibited by dicyclohexylcarbodiimide. Produces ATP from ADP in the presence of a proton gradient across the membrane. The alpha chain is a regulatory subunit. Its function is as follows. The complex from the organism is particularly stable to disruption and remains functional after 6 hrs at 55 degrees Celsius. The protein is ATP synthase subunit alpha of Thermosynechococcus vestitus (strain NIES-2133 / IAM M-273 / BP-1).